Here is a 529-residue protein sequence, read N- to C-terminus: Peptide chain release factor 3 (529 aa).

Positions 11-279 (AKRRTFAIIS…GLVDWAPKPQ (269 aa)) constitute a tr-type G domain. GTP is bound by residues 20 to 27 (SHPDAGKT), 88 to 92 (DTPGH), and 142 to 145 (NKLD).

It belongs to the TRAFAC class translation factor GTPase superfamily. Classic translation factor GTPase family. PrfC subfamily.

It localises to the cytoplasm. Increases the formation of ribosomal termination complexes and stimulates activities of RF-1 and RF-2. It binds guanine nucleotides and has strong preference for UGA stop codons. It may interact directly with the ribosome. The stimulation of RF-1 and RF-2 is significantly reduced by GTP and GDP, but not by GMP. The sequence is that of Peptide chain release factor 3 from Idiomarina loihiensis (strain ATCC BAA-735 / DSM 15497 / L2-TR).